We begin with the raw amino-acid sequence, 530 residues long: UDP-glucuronosyltransferase 1A10 (530 aa).

A signal peptide spans 1–25; that stretch reads MARAGWTSPVPLCVCLLLTCGFAEA. 3 N-linked (GlcNAc...) asparagine glycosylation sites follow: Asn71, Asn292, and Asn344. A helical membrane pass occupies residues 488–504; that stretch reads VIGFLLAVVLTVAFITF.

Belongs to the UDP-glycosyltransferase family. As to quaternary structure, homodimer. Homooligomer. Interacts with UGT1A1, UGT1A3, UGT1A4, UGT1A6, UGT1A7, UGT1A8 and UGT1A9 to form heterodimers. Isoform 1 interacts with isoform 2/i2 suggesting that oligomerization is involved in negative regulation of transferase activity by isoform 2. Isoform 1 also interacts with respective i2 isoforms of UGT1A1, UGT1A3, UGT1A4, UGT1A6, UGT1A7, UGT1A8 and UGT1A9. As to expression, liver and colon. Isoform 1 and isoform 2 are expressed in colon, esophagus and small intestine; isoform 2 but not isoform 1 is expressed in liver or kidney.

It is found in the endoplasmic reticulum membrane. The catalysed reaction is glucuronate acceptor + UDP-alpha-D-glucuronate = acceptor beta-D-glucuronoside + UDP + H(+). It catalyses the reaction 17beta-estradiol + UDP-alpha-D-glucuronate = 17beta-estradiol 3-O-(beta-D-glucuronate) + UDP + H(+). The enzyme catalyses 17beta-estradiol + UDP-alpha-D-glucuronate = 17beta-estradiol 17-O-(beta-D-glucuronate) + UDP + H(+). It carries out the reaction 17alpha-estradiol + UDP-alpha-D-glucuronate = 17alpha-estradiol 3-O-(beta-D-glucuronate) + UDP + H(+). The catalysed reaction is 16alpha,17beta-estriol + UDP-alpha-D-glucuronate = 16alpha,17beta-estriol 3-O-(beta-D-glucuronate) + UDP + H(+). It catalyses the reaction 16beta,17beta-estriol + UDP-alpha-D-glucuronate = 16beta,17beta-estriol 3-O-(beta-D-glucuronate) + UDP + H(+). The enzyme catalyses 16alpha,17alpha-estriol + UDP-alpha-D-glucuronate = 16alpha,17alpha-estriol 3-O-(beta-D-glucuronate) + UDP + H(+). It carries out the reaction 16alpha-hydroxyestrone + UDP-alpha-D-glucuronate = 16alpha-hydroxyestrone 3-O-(beta-D-glucuronate) + UDP + H(+). The catalysed reaction is estrone + UDP-alpha-D-glucuronate = estrone 3-O-(beta-D-glucuronate) + UDP + H(+). It catalyses the reaction prunetin + UDP-alpha-D-glucuronate = prunetin-4'-O-beta-D-glucuronide + UDP. The enzyme catalyses (5Z,8Z,11Z,14Z)-eicosatetraenoate + UDP-alpha-D-glucuronate = O-[(5Z),(8Z),(11Z),(14Z)-eicosatetraenoyl]-beta-D-glucuronate + UDP. It carries out the reaction 15-hydroxy-(5Z,8Z,11Z,13E)-eicosatetraenoate + UDP-alpha-D-glucuronate = 15-O-(beta-D-glucuronosyl)-(5Z,8Z,11Z,14Z)-eicosatetraenoate + UDP + H(+). The catalysed reaction is prostaglandin B1 + UDP-alpha-D-glucuronate = 15-O-(beta-D-glucuronosyl)-prostaglandin B1 + UDP + H(+). It catalyses the reaction (E)-ferulate + UDP-alpha-D-glucuronate = (E)-4-O-(beta-D-glucuronosyl)-ferulate + UDP + H(+). The enzyme catalyses (E)-ferulate + UDP-alpha-D-glucuronate = (E)-ferulic acid beta-D-glucuronate ester + UDP. It carries out the reaction losartan + UDP-alpha-D-glucuronate = losartan-2-N-beta-D-glucuronide + UDP. The catalysed reaction is candesartan + UDP-alpha-D-glucuronate = candesartan O-beta-D-glucuronoside + UDP. It catalyses the reaction candesartan + UDP-alpha-D-glucuronate = candesartan-2-N-beta-D-glucuronide + UDP. The enzyme catalyses zolasartan + UDP-alpha-D-glucuronate = zolarsartan-1-N-beta-D-glucuronide + UDP. Its function is as follows. UDP-glucuronosyltransferase (UGT) that catalyzes phase II biotransformation reactions in which lipophilic substrates are conjugated with glucuronic acid to increase the metabolite's water solubility, thereby facilitating excretion into either the urine or bile. Essential for the elimination and detoxification of drugs, xenobiotics and endogenous compounds. Catalyzes the glucuronidation of endogenous estrogen hormones such as estradiol, estrone and estriol. Involved in the glucuronidation of arachidonic acid (AA) and AA-derived eicosanoids including 15-HETE and PGB1. Involved in the glucuronidation of the phytochemical ferulic acid at the phenolic or the carboxylic acid group. Also catalyzes the glucuronidation of the isoflavones genistein, daidzein, glycitein, formononetin, biochanin A and prunetin, which are phytoestrogens with anticancer and cardiovascular properties. Involved in the glucuronidation of the AGTR1 angiotensin receptor antagonist losartan, caderastan and zolarsatan, drugs which can inhibit the effect of angiotensin II. Functionally, lacks UGT glucuronidation activity but acts as a negative regulator of isoform 1. The sequence is that of UDP-glucuronosyltransferase 1A10 from Homo sapiens (Human).